Consider the following 427-residue polypeptide: Fc receptor-like B (427 aa).

Residues 1 to 17 (MWMLAALLLLVPRSGKA) form the signal peptide. 2 Ig-like C2-type domains span residues 23–101 (PVLT…LSVS) and 103–189 (DWLI…VAVT). Cystine bridges form between C44/C85 and C124/C168. N-linked (GlcNAc...) asparagine glycosylation occurs at N152. Residues 401–418 (TPETPNSHVTVNPATPET) show a composition bias toward polar residues. A disordered region spans residues 401-427 (TPETPNSHVTVNPATPETTVMEGRVDS).

Expressed at low levels. Expressed in B-lymphocytes. Detected in spleen, lymph node, kidney, lung and brain.

It is found in the cytoplasm. It localises to the endoplasmic reticulum. The polypeptide is Fc receptor-like B (Fcrlb) (Mus musculus (Mouse)).